The chain runs to 514 residues: Tryptophan decarboxylase 1 (514 aa).

Phenylalanine 104 contacts serotonin. Pyridoxal 5'-phosphate contacts are provided by threonine 175 and serine 176. Histidine 214 lines the serotonin pocket. Position 273 (threonine 273) interacts with pyridoxal 5'-phosphate. At lysine 330 the chain carries N6-(pyridoxal phosphate)lysine. Tyrosine 359 acts as the Proton donor in catalysis. Positions 380 and 381 each coordinate pyridoxal 5'-phosphate.

Belongs to the group II decarboxylase family. Forms homodimers. It depends on pyridoxal 5'-phosphate as a cofactor.

The catalysed reaction is L-tryptophan + H(+) = tryptamine + CO2. The enzyme catalyses 5-hydroxy-L-tryptophan + H(+) = serotonin + CO2. Involved in serotonin biosynthesis. Catalyzes the decarboxylation of L-tryptophan to produce tryptamine, which is converted to serotonin by tryptamine 5-hydroxylase. May play a major role in serotonin biosynthesis during senescence. Accumulation of serotonin attenuates leaf senescence. Catalyzes the decarboxylation of 5-hydroxy-L-tryptophan to produce serotonin. This chain is Tryptophan decarboxylase 1, found in Oryza sativa subsp. japonica (Rice).